An 86-amino-acid chain; its full sequence is Protein Tat (86 aa).

The segment at 1–21 (MDPVDPNIEPWNHPGSQPKTA) is disordered. Residues 1 to 24 (MDPVDPNIEPWNHPGSQPKTACNR) are interaction with human CREBBP. The interval 1–48 (MDPVDPNIEPWNHPGSQPKTACNRCHCKKCCYHCQVCFITKGLGISYG) is transactivation. C22, C25, and C27 together coordinate Zn(2+). The cysteine-rich stretch occupies residues 22 to 37 (CNRCHCKKCCYHCQVC). At K28 the chain carries N6-acetyllysine; by host PCAF. Positions 30, 33, 34, and 37 each coordinate Zn(2+). The tract at residues 38–48 (FITKGLGISYG) is core. Positions 47-86 (YGRKKRRQRRRPSQGGQTHQDPIPKQPSSQPRGDPTGPKE) are disordered. Basic residues predominate over residues 48 to 58 (GRKKRRQRRRP). A Nuclear localization signal, RNA-binding (TAR), and protein transduction motif is present at residues 49 to 57 (RKKRRQRRR). The interval 49–86 (RKKRRQRRRPSQGGQTHQDPIPKQPSSQPRGDPTGPKE) is interaction with the host capping enzyme RNGTT. Residues K50 and K51 each carry the N6-acetyllysine; by host EP300 and GCN5L2 modification. An asymmetric dimethylarginine; by host PRMT6 mark is found at R52 and R53. A compositionally biased stretch (polar residues) spans 60 to 77 (QGGQTHQDPIPKQPSSQP). K71 participates in a covalent cross-link: Glycyl lysine isopeptide (Lys-Gly) (interchain with G-Cter in ubiquitin). The Cell attachment site motif lies at 78–80 (RGD).

This sequence belongs to the lentiviruses Tat family. As to quaternary structure, interacts with host CCNT1. Associates with the P-TEFb complex composed at least of Tat, P-TEFb (CDK9 and CCNT1), TAR RNA, RNA Pol II. Recruits the HATs CREBBP, TAF1/TFIID, EP300, PCAF and GCN5L2. Interacts with host KAT5/Tip60; this interaction targets the latter to degradation. Interacts with the host deacetylase SIRT1. Interacts with host capping enzyme RNGTT; this interaction stimulates RNGTT. Binds to host KDR, and to the host integrins ITGAV/ITGB3 and ITGA5/ITGB1. Interacts with host KPNB1/importin beta-1 without previous binding to KPNA1/importin alpha-1. Interacts with EIF2AK2. Interacts with host nucleosome assembly protein NAP1L1; this interaction may be required for the transport of Tat within the nucleus, since the two proteins interact at the nuclear rim. Interacts with host C1QBP/SF2P32; this interaction involves lysine-acetylated Tat. Interacts with the host chemokine receptors CCR2, CCR3 and CXCR4. Interacts with host DPP4/CD26; this interaction may trigger an anti-proliferative effect. Interacts with host LDLR. Interacts with the host extracellular matrix metalloproteinase MMP1. Interacts with host PRMT6; this interaction mediates Tat's methylation. Interacts with, and is ubiquitinated by MDM2/Hdm2. Interacts with host PSMC3 and HTATIP2. Interacts with STAB1; this interaction may overcome SATB1-mediated repression of IL2 and IL2RA (interleukin) in T cells by binding to the same domain than HDAC1. Interacts (when acetylated) with human CDK13, thereby increasing HIV-1 mRNA splicing and promoting the production of the doubly spliced HIV-1 protein Nef. Interacts with host TBP; this interaction modulates the activity of transcriptional pre-initiation complex. Interacts with host RELA. Interacts with host PLSCR1; this interaction negatively regulates Tat transactivation activity by altering its subcellular distribution. Post-translationally, asymmetrical arginine methylation by host PRMT6 seems to diminish the transactivation capacity of Tat and affects the interaction with host CCNT1. In terms of processing, acetylation by EP300, CREBBP, GCN5L2/GCN5 and PCAF regulates the transactivation activity of Tat. EP300-mediated acetylation of Lys-50 promotes dissociation of Tat from the TAR RNA through the competitive binding to PCAF's bromodomain. In addition, the non-acetylated Tat's N-terminus can also interact with PCAF. PCAF-mediated acetylation of Lys-28 enhances Tat's binding to CCNT1. Lys-50 is deacetylated by SIRT1. Polyubiquitination by host MDM2 does not target Tat to degradation, but activates its transactivation function and fosters interaction with CCNT1 and TAR RNA. Post-translationally, phosphorylated by EIF2AK2 on serine and threonine residues adjacent to the basic region important for TAR RNA binding and function. Phosphorylation of Tat by EIF2AK2 is dependent on the prior activation of EIF2AK2 by dsRNA.

It localises to the host nucleus. The protein localises to the host nucleolus. Its subcellular location is the host cytoplasm. It is found in the secreted. Transcriptional activator that increases RNA Pol II processivity, thereby increasing the level of full-length viral transcripts. Recognizes a hairpin structure at the 5'-LTR of the nascent viral mRNAs referred to as the transactivation responsive RNA element (TAR) and recruits the cyclin T1-CDK9 complex (P-TEFb complex) that will in turn hyperphosphorylate the RNA polymerase II to allow efficient elongation. The CDK9 component of P-TEFb and other Tat-activated kinases hyperphosphorylate the C-terminus of RNA Pol II that becomes stabilized and much more processive. Other factors such as HTATSF1/Tat-SF1, SUPT5H/SPT5, and HTATIP2 are also important for Tat's function. Besides its effect on RNA Pol II processivity, Tat induces chromatin remodeling of proviral genes by recruiting the histone acetyltransferases (HATs) CREBBP, EP300 and PCAF to the chromatin. This also contributes to the increase in proviral transcription rate, especially when the provirus integrates in transcriptionally silent region of the host genome. To ensure maximal activation of the LTR, Tat mediates nuclear translocation of NF-kappa-B by interacting with host RELA. Through its interaction with host TBP, Tat may also modulate transcription initiation. Tat can reactivate a latently infected cell by penetrating in it and transactivating its LTR promoter. In the cytoplasm, Tat is thought to act as a translational activator of HIV-1 mRNAs. Functionally, extracellular circulating Tat can be endocytosed by surrounding uninfected cells via the binding to several surface receptors such as CD26, CXCR4, heparan sulfate proteoglycans (HSPG) or LDLR. Neurons are rarely infected, but they internalize Tat via their LDLR. Through its interaction with nuclear HATs, Tat is potentially able to control the acetylation-dependent cellular gene expression. Modulates the expression of many cellular genes involved in cell survival, proliferation or in coding for cytokines or cytokine receptors. Tat plays a role in T-cell and neurons apoptosis. Tat induced neurotoxicity and apoptosis probably contribute to neuroAIDS. Circulating Tat also acts as a chemokine-like and/or growth factor-like molecule that binds to specific receptors on the surface of the cells, affecting many cellular pathways. In the vascular system, Tat binds to ITGAV/ITGB3 and ITGA5/ITGB1 integrins dimers at the surface of endothelial cells and competes with bFGF for heparin-binding sites, leading to an excess of soluble bFGF. This chain is Protein Tat, found in Human immunodeficiency virus type 1 group M subtype D (isolate Z2/CDC-Z34) (HIV-1).